The sequence spans 87 residues: Toxin ICK-42 (87 aa).

The first 19 residues, 1–19 (MKPIVYMLLFCAFTVVILG), serve as a signal peptide directing secretion. 4 cysteine pairs are disulfide-bonded: Cys40-Cys54, Cys40-Cys77, Cys53-Cys66, and Cys80-Cys87.

It belongs to the neurotoxin 27 (Jztx-72) family. ICK-41 subfamily. As to expression, expressed by the venom gland.

The protein localises to the secreted. Its function is as follows. Probable neurotoxin with ion channel impairing activity. This chain is Toxin ICK-42, found in Trittame loki (Brush-footed trapdoor spider).